We begin with the raw amino-acid sequence, 679 residues long: Glycine--tRNA ligase beta subunit (679 aa).

The protein belongs to the class-II aminoacyl-tRNA synthetase family. Tetramer of two alpha and two beta subunits.

The protein resides in the cytoplasm. The catalysed reaction is tRNA(Gly) + glycine + ATP = glycyl-tRNA(Gly) + AMP + diphosphate. The polypeptide is Glycine--tRNA ligase beta subunit (Streptococcus agalactiae serotype III (strain NEM316)).